We begin with the raw amino-acid sequence, 675 residues long: Cytoplasmic tyrosine-protein kinase BMX (675 aa).

Residues 4-111 (KSILEELLLK…WLKALQKEIR (108 aa)) form the PH domain. The Btk-type zinc finger occupies 113 to 149 (NPHLLVKYHSGFFVDGKFLCCQQSCKAAPGCTLWEAY). 4 residues coordinate Zn(2+): His-121, Cys-132, Cys-133, and Cys-143. Phosphotyrosine; by autocatalysis occurs at positions 216 and 224. The 97-residue stretch at 296-392 (WFAGNISRSQ…GMITRLRHPV (97 aa)) folds into the SH2 domain. A Protein kinase domain is found at 417-675 (ITLLKELGSG…IEPLREKDKH (259 aa)). ATP contacts are provided by residues 423-431 (LGSGQFGVV) and Lys-445. Asp-536 serves as the catalytic Proton acceptor. The residue at position 566 (Tyr-566) is a Phosphotyrosine; by SRC and autocatalysis. The CAV1-binding signature appears at 596–603 (WAFGILMW).

This sequence belongs to the protein kinase superfamily. Tyr protein kinase family. TEC subfamily. Interacts with BCAR1, CAV1, MYD88, PTK2/FAK1, RUFY1, RUFY2, STAT3, TIRAP and TNFRSF1B. The cofactor is Zn(2+). Post-translationally, phosphorylated in response to protein I/II and to LPS. Phosphorylation at Tyr-566 by SRC and by autocatalysis leads to activation and is required for STAT3 phosphorylation by BMX. Highly expressed in cells with great migratory potential, including endothelial cells and metastatic carcinoma cell lines.

The protein resides in the cytoplasm. The catalysed reaction is L-tyrosyl-[protein] + ATP = O-phospho-L-tyrosyl-[protein] + ADP + H(+). TEK and vascular endothelial growth factor receptor 1 (FLT1) stimulate BMX tyrosine kinase activity. Activated by integrins through the mediation of PTK2/FAK1. Activated by TNF through the mediation of TNFRSF1B. Non-receptor tyrosine kinase that plays central but diverse modulatory roles in various signaling processes involved in the regulation of actin reorganization, cell migration, cell proliferation and survival, cell adhesion, and apoptosis. Participates in signal transduction stimulated by growth factor receptors, cytokine receptors, G-protein coupled receptors, antigen receptors and integrins. Induces tyrosine phosphorylation of BCAR1 in response to integrin regulation. Activation of BMX by integrins is mediated by PTK2/FAK1, a key mediator of integrin signaling events leading to the regulation of actin cytoskeleton and cell motility. Plays a critical role in TNF-induced angiogenesis, and implicated in the signaling of TEK and FLT1 receptors, 2 important receptor families essential for angiogenesis. Required for the phosphorylation and activation of STAT3, a transcription factor involved in cell differentiation. Also involved in interleukin-6 (IL6) induced differentiation. Also plays a role in programming adaptive cytoprotection against extracellular stress in different cell systems, salivary epithelial cells, brain endothelial cells, and dermal fibroblasts. May be involved in regulation of endocytosis through its interaction with an endosomal protein RUFY1. May also play a role in the growth and differentiation of hematopoietic cells; as well as in signal transduction in endocardial and arterial endothelial cells. This is Cytoplasmic tyrosine-protein kinase BMX (BMX) from Homo sapiens (Human).